Here is a 276-residue protein sequence, read N- to C-terminus: Rhomboid protease GlpG (276 aa).

The next 6 helical transmembrane spans lie at 94–114 (GPFT…QNLL), 142–162 (AFMH…WYLG), 169–189 (IGSG…GFVQ), 192–212 (FSGP…GYVW), 229–249 (LILF…GMAI), and 252–272 (GAHV…TLHG). Ser-201 functions as the Nucleophile in the catalytic mechanism. The active site involves His-254.

This sequence belongs to the peptidase S54 family.

The protein resides in the cell inner membrane. It catalyses the reaction Cleaves type-1 transmembrane domains using a catalytic dyad composed of serine and histidine that are contributed by different transmembrane domains.. Functionally, rhomboid-type serine protease that catalyzes intramembrane proteolysis. This is Rhomboid protease GlpG from Klebsiella pneumoniae (strain 342).